Consider the following 464-residue polypeptide: MTVKTRFAPSPTGYLHIGGVRTALFSWAFARHHKGEFLLRIEDTDLARSTAESVNIILDGMKWVGLDYDNAGNVVYQTRRFDRYKEVIAELLEKGDAYYCYCSKEELEAMREKAEKEGTATYDRRWRPEAGKTLPEIPAGVQPVVRFKTPLDGVTKWTDLVKGEISIPNEALDDLIIARADGTPTYNFCVVVDDYDMGVTHVIRGDDHVNNTPKQINILKAIGATLPEYGHLPMILNEQGKKISKRSGDTVAITDFGAMGILPEAMLNYLARLGWAHGDDEFFTMEQFIEWFDLKDVSPSPSRMDLKKLYWINGEHIKITPNGKLAELVKPRLALRDIHETEKPALEDVLALVKDRAQDLNTLADECLYFYVKQTPTEADVQKHWDDEAAARMLRFAERLEGLEDWNTEAIHDLFKPFCDEEGIKMGKLGMPLRLAVCGTAKTPSVDAVLALIGKEEVLKRIRA.

Residues 9-19 (PSPTGYLHIGG) carry the 'HIGH' region motif. A 'KMSKS' region motif is present at residues 242 to 246 (KISKR). Residue Lys245 coordinates ATP.

Belongs to the class-I aminoacyl-tRNA synthetase family. Glutamate--tRNA ligase type 1 subfamily. In terms of assembly, monomer.

The protein localises to the cytoplasm. The catalysed reaction is tRNA(Glu) + L-glutamate + ATP = L-glutamyl-tRNA(Glu) + AMP + diphosphate. Catalyzes the attachment of glutamate to tRNA(Glu) in a two-step reaction: glutamate is first activated by ATP to form Glu-AMP and then transferred to the acceptor end of tRNA(Glu). This chain is Glutamate--tRNA ligase, found in Neisseria meningitidis serogroup C (strain 053442).